The following is a 102-amino-acid chain: Small ribosomal subunit protein uS10 (102 aa).

Belongs to the universal ribosomal protein uS10 family. In terms of assembly, part of the 30S ribosomal subunit.

Its function is as follows. Involved in the binding of tRNA to the ribosomes. The polypeptide is Small ribosomal subunit protein uS10 (Micrococcus luteus (strain ATCC 4698 / DSM 20030 / JCM 1464 / CCM 169 / CCUG 5858 / IAM 1056 / NBRC 3333 / NCIMB 9278 / NCTC 2665 / VKM Ac-2230) (Micrococcus lysodeikticus)).